A 293-amino-acid polypeptide reads, in one-letter code: N-acetylneuraminate lyase (293 aa).

Aceneuramate is bound by residues Ser-47 and Thr-48. The Proton donor role is filled by Tyr-136. Catalysis depends on Lys-164, which acts as the Schiff-base intermediate with substrate. Thr-166, Gly-188, Asp-190, Glu-191, and Ser-207 together coordinate aceneuramate.

Belongs to the DapA family. NanA subfamily. In terms of assembly, homotetramer.

It localises to the cytoplasm. It carries out the reaction aceneuramate = aldehydo-N-acetyl-D-mannosamine + pyruvate. Its pathway is amino-sugar metabolism; N-acetylneuraminate degradation; D-fructose 6-phosphate from N-acetylneuraminate: step 1/5. Its function is as follows. Catalyzes the reversible aldol cleavage of N-acetylneuraminic acid (sialic acid; Neu5Ac) to form pyruvate and N-acetylmannosamine (ManNAc) via a Schiff base intermediate. In Haemophilus influenzae (strain ATCC 51907 / DSM 11121 / KW20 / Rd), this protein is N-acetylneuraminate lyase.